The primary structure comprises 286 residues: Probable endonuclease 4 (286 aa).

Zn(2+) contacts are provided by H67, H107, E146, D180, H183, H217, D230, H232, and E262.

This sequence belongs to the AP endonuclease 2 family. Requires Zn(2+) as cofactor.

It catalyses the reaction Endonucleolytic cleavage to 5'-phosphooligonucleotide end-products.. Its function is as follows. Endonuclease IV plays a role in DNA repair. It cleaves phosphodiester bonds at apurinic or apyrimidinic (AP) sites, generating a 3'-hydroxyl group and a 5'-terminal sugar phosphate. The protein is Probable endonuclease 4 of Methanosphaerula palustris (strain ATCC BAA-1556 / DSM 19958 / E1-9c).